We begin with the raw amino-acid sequence, 138 residues long: Large ribosomal subunit protein bL17 (138 aa).

This sequence belongs to the bacterial ribosomal protein bL17 family. As to quaternary structure, part of the 50S ribosomal subunit. Contacts protein L32.

This Nitrobacter winogradskyi (strain ATCC 25391 / DSM 10237 / CIP 104748 / NCIMB 11846 / Nb-255) protein is Large ribosomal subunit protein bL17.